Reading from the N-terminus, the 802-residue chain is DEAD-box ATP-dependent RNA helicase 28 (802 aa).

The interval Met-1–Pro-179 is disordered. Acidic residues-rich tracts occupy residues Gly-76–Glu-131 and Lys-138–Glu-169. Coiled coils occupy residues Asp-90–Val-122 and Gln-149–Ser-174. The Q motif signature appears at Asn-194–Ala-222. Positions Ile-225–Leu-399 constitute a Helicase ATP-binding domain. Ala-238–Thr-245 contacts ATP. Positions Asp-347 to Asp-350 match the DEAD box motif. The Helicase C-terminal domain occupies Val-429–Ala-573. Residues Val-572 to Lys-616 are a coiled coil. Residues Lys-639–Lys-802 are disordered. A compositionally biased stretch (polar residues) spans Ser-644–Gln-659. A compositionally biased stretch (basic residues) spans Lys-666–Arg-684. A coiled-coil region spans residues Arg-671–Lys-712. A compositionally biased stretch (acidic residues) spans Met-691 to Ala-702. A compositionally biased stretch (basic residues) spans Arg-776 to Lys-802.

Belongs to the DEAD box helicase family. DDX27/DRS1 subfamily.

The enzyme catalyses ATP + H2O = ADP + phosphate + H(+). The protein is DEAD-box ATP-dependent RNA helicase 28 of Oryza sativa subsp. japonica (Rice).